Consider the following 731-residue polypeptide: Alpha-catulin (731 aa).

2 positions are modified to phosphoserine: Ser-373 and Ser-537. Positions 535–559 are disordered; sequence HLSLPKPTKNSANLKSLKPDKPDSE.

Belongs to the vinculin/alpha-catenin family. Interacts with ARHGEF1. Interacts with Dtna. The interaction is required for correct localization of both Ctnnal1 and Dtna.

The protein resides in the cytoplasm. The protein localises to the cytoskeleton. It localises to the cell membrane. In terms of biological role, may modulate the Rho pathway signaling by providing a scaffold for the Lbc Rho guanine nucleotide exchange factor (ARHGEF1). The sequence is that of Alpha-catulin (Ctnnal1) from Mus musculus (Mouse).